The following is a 517-amino-acid chain: Optineurin (517 aa).

2 coiled-coil regions span residues 15–127 (NLGS…DLVA) and 174–453 (KAES…LGRH). Disordered regions lie at residues 216-237 (KLEH…TNAS) and 454-488 (SMSE…WQQQ). The span at 222 to 237 (SSAQTSLPSAAETNAS) shows a compositional bias: polar residues. A CCHC NOA-type zinc finger spans residues 487 to 517 (QQNIPDHACPKCGEVLPDLDSLQIHIMDCII). Residues cysteine 495, cysteine 498, histidine 511, and cysteine 515 each contribute to the Zn(2+) site.

Its subcellular location is the cytoplasm. It localises to the perinuclear region. It is found in the golgi apparatus. The protein resides in the trans-Golgi network. The protein localises to the cytoplasmic vesicle. Its subcellular location is the recycling endosome. It localises to the autophagosome. Functionally, probably part of the TNF-alpha signaling pathway that can shift the equilibrium toward induction of cell death. May act by regulating membrane trafficking and cellular morphogenesis. The protein is Optineurin (optn) of Danio rerio (Zebrafish).